The primary structure comprises 238 residues: MATTVKELKATARPKSGKGAARAERRAGRVPGVIYGNNQPPVTISIEDRELRQRILAGRFLTTLVDIDLEGKKHRVIPRDYHLDPVKDFPIHVDFMRLGEGATIRISVPLHVVKSEASPGVKRGGTVNIVAHAIELECGVESIPQYIEADVGSLEIGHSLHLSDVKLPAGVKALTREDATLVTIVPPSGYAEEQKAAAAAAAGGAAPAAAAPAAGAAAPAAAAPAAAAKAPAGGDKKK.

The span at 1–10 shows a compositional bias: basic and acidic residues; the sequence is MATTVKELKA. The tract at residues 1 to 24 is disordered; it reads MATTVKELKATARPKSGKGAARAE.

This sequence belongs to the bacterial ribosomal protein bL25 family. CTC subfamily. As to quaternary structure, part of the 50S ribosomal subunit; part of the 5S rRNA/L5/L18/L25 subcomplex. Contacts the 5S rRNA. Binds to the 5S rRNA independently of L5 and L18.

Functionally, this is one of the proteins that binds to the 5S RNA in the ribosome where it forms part of the central protuberance. The protein is Large ribosomal subunit protein bL25 of Bradyrhizobium diazoefficiens (strain JCM 10833 / BCRC 13528 / IAM 13628 / NBRC 14792 / USDA 110).